A 160-amino-acid chain; its full sequence is Cytochrome b6-f complex subunit 4 (160 aa).

3 helical membrane-spanning segments follow: residues 36–56 (LLYIFPVVILGTIACNVGLAV), 95–115 (LLGVFLMVSVPAGLLTVPFLE), and 131–151 (TVFLIGTAVALWLGIGATLPI).

The protein belongs to the cytochrome b family. PetD subfamily. The 4 large subunits of the cytochrome b6-f complex are cytochrome b6, subunit IV (17 kDa polypeptide, petD), cytochrome f and the Rieske protein, while the 4 small subunits are petG, petL, petM and petN. The complex functions as a dimer.

It is found in the plastid. It localises to the chloroplast thylakoid membrane. Functionally, component of the cytochrome b6-f complex, which mediates electron transfer between photosystem II (PSII) and photosystem I (PSI), cyclic electron flow around PSI, and state transitions. The chain is Cytochrome b6-f complex subunit 4 from Gossypium barbadense (Sea Island cotton).